Reading from the N-terminus, the 323-residue chain is Peridinin-chlorophyll a-binding protein 3 (323 aa).

2 consecutive repeat copies span residues aspartate 1–proline 173 and aspartate 174–valine 323.

As to quaternary structure, homotrimer.

Its subcellular location is the plastid. The protein localises to the chloroplast. In terms of biological role, water-soluble antenna for capture of solar energy in the blue-green range. Peridinin is an asymmetric carotenoid. This is Peridinin-chlorophyll a-binding protein 3 from Amphidinium carterae (Dinoflagellate).